Consider the following 335-residue polypeptide: Putative D-threonate 4-phosphate dehydrogenase (335 aa).

The substrate site is built by His-140 and Thr-141. A divalent metal cation is bound by residues His-170, His-214, and His-269. Lys-277 and Arg-295 together coordinate substrate.

The protein belongs to the PdxA family. PdxA2 subfamily. Homodimer. The cofactor is a divalent metal cation.

It carries out the reaction 4-O-phospho-D-threonate + NAD(+) = dihydroxyacetone phosphate + CO2 + NADH. Its function is as follows. Catalyzes the NAD-dependent oxidation and subsequent decarboxylation of D-threonate 4-phosphate to produce dihydroxyacetone phosphate (DHAP). The protein is Putative D-threonate 4-phosphate dehydrogenase of Symbiobacterium thermophilum (strain DSM 24528 / JCM 14929 / IAM 14863 / T).